Reading from the N-terminus, the 341-residue chain is HTH-type transcriptional repressor PurR (341 aa).

The 55-residue stretch at 2 to 56 folds into the HTH lacI-type domain; that stretch reads ATIKDVAKRANVSTTTVSHVINKTRFVAEETRNAVWAAIKELHYSPSAVARSLKV. Positions 4 to 23 form a DNA-binding region, H-T-H motif; sequence IKDVAKRANVSTTTVSHVIN. Residues 48–56 mediate DNA binding; sequence SAVARSLKV. Hypoxanthine contacts are provided by tyrosine 73, arginine 190, threonine 192, phenylalanine 221, and aspartate 275.

In terms of assembly, homodimer.

Its pathway is purine metabolism; purine nucleotide biosynthesis [regulation]. Its function is as follows. Is the main repressor of the genes involved in the de novo synthesis of purine nucleotides, regulating purB, purC, purEK, purF, purHD, purL, purMN and guaBA expression. PurR is allosterically activated to bind its cognate DNA by binding the purine corepressors, hypoxanthine or guanine, thereby effecting transcription repression. This is HTH-type transcriptional repressor PurR from Klebsiella pneumoniae (strain 342).